A 195-amino-acid polypeptide reads, in one-letter code: Transmembrane protein 126A (195 aa).

The Mitochondrial matrix portion of the chain corresponds to 1–33; sequence MENHKSNNKENITIVDISRKINQLPEAERNLLE. The chain crosses the membrane as a helical span at residues 34-54; the sequence is NGSVYVGLNAALCGLIANSLF. Over 55–56 the chain is Mitochondrial intermembrane; that stretch reads RR. The helical transmembrane segment at 57-77 threads the bilayer; that stretch reads ILNVTKARIAAGLPMAGIPFL. Topologically, residues 78 to 110 are mitochondrial matrix; that stretch reads TTDLTYRCFVSFPLNTGDLDCETCTITRSGLTG. The helical transmembrane segment at 111–131 threads the bilayer; it reads LVIGGLYPVFLAIPVNGGLAA. Topologically, residues 132 to 158 are mitochondrial intermembrane; it reads RYQSALLPHKGNILSYWIRTSKPVFRK. A helical transmembrane segment spans residues 159-175; that stretch reads MLFPILLQTMFSAYLGS. Residues 176–195 are Mitochondrial matrix-facing; the sequence is EQYKLLIKALQLSEPGKEIH.

This sequence belongs to the TMEM126 family. As to quaternary structure, interacts with OXA1L; promoting cotranslational quality control in mitochondria. In terms of tissue distribution, strongly expressed in brain, cerebellum, skeletal muscle, testis. High expression also found in fetal brain, fetal retinal pigmentary epithelium, and fetal retina. Highly expressed in retinal ganglion cells.

It localises to the mitochondrion inner membrane. Functionally, protein required for the cotranslational protein quality control in the inner membrane of the mitochondria. Associates with newly synthesized polypeptides and may act as a chaperone that cooperates with OXA1L for the insertion of newly synthesized mitochondrial proteins into the inner membrane. Required for the assembly of the ND4 module of mitochondrial complex I. The sequence is that of Transmembrane protein 126A from Homo sapiens (Human).